The primary structure comprises 1009 residues: Type VII secretion system accessory factor EsaA (1009 aa).

The next 6 helical transmembrane spans lie at 7-27, 822-842, 869-889, 903-923, 928-948, and 979-999; these read IYAL…IFFV, ISPT…AYIF, AITS…VGLI, KFIL…TYLL, SIGM…MNNL, and IGLA…LNMF.

Belongs to the EsaA family. Homodimer. Interacts with EssB.

The protein resides in the cell membrane. Functionally, component of the type VII secretion system (Ess). Provides together with EssB and other components such as EssC and EssE a secretion platform across the cytoplasmic membrane in the host. The protein is Type VII secretion system accessory factor EsaA of Staphylococcus aureus (strain MRSA252).